We begin with the raw amino-acid sequence, 196 residues long: 7-methyl-GTP pyrophosphatase (196 aa).

The active-site Proton acceptor is D72.

Belongs to the Maf family. YceF subfamily. Requires a divalent metal cation as cofactor.

The protein localises to the cytoplasm. The catalysed reaction is N(7)-methyl-GTP + H2O = N(7)-methyl-GMP + diphosphate + H(+). Nucleoside triphosphate pyrophosphatase that hydrolyzes 7-methyl-GTP (m(7)GTP). May have a dual role in cell division arrest and in preventing the incorporation of modified nucleotides into cellular nucleic acids. This chain is 7-methyl-GTP pyrophosphatase, found in Neisseria meningitidis serogroup A / serotype 4A (strain DSM 15465 / Z2491).